Reading from the N-terminus, the 526-residue chain is Outer capsid protein VP5 (526 aa).

The interval Met1 to Glu42 is involved in membrane permeabilization.

Belongs to the orbivirus VP5 family.

The protein resides in the virion. VP5 protein is one of the two proteins (with VP2) which constitute the virus particle outer capsid. Acts as a membrane permeabilization protein that mediates release of viral particles from endosomal compartments into the cytoplasm. Permeabilization activity is probably negatively regulated by VP2 and is triggered by endosomal degradation of VP2 and exposure to low pH. The chain is Outer capsid protein VP5 (Segment-6) from Antilocapra americana (Pronghorn).